A 295-amino-acid polypeptide reads, in one-letter code: Universal stress protein Mb2028c (295 aa).

ATP-binding positions include Gly-13, Gly-117–Ala-123, Ser-131–Val-132, Gly-165, Asp-198, Gly-262–Gly-268, and Ser-276–Ser-278.

It belongs to the universal stress protein A family.

This chain is Universal stress protein Mb2028c, found in Mycobacterium bovis (strain ATCC BAA-935 / AF2122/97).